The sequence spans 387 residues: Galanin receptor type 2 (387 aa).

Over 1-28 the chain is Extracellular; it reads MNVSGCPGAGNASQAGGGGGWHPEAVIV. N-linked (GlcNAc...) asparagine glycosylation is found at Asn2 and Asn11. Residues 29–49 form a helical membrane-spanning segment; it reads PLLFALIFLVGTVGNTLVLAV. The Cytoplasmic segment spans residues 50–60; sequence LLRGGQAVSTT. The chain crosses the membrane as a helical span at residues 61–81; the sequence is NLFILNLGVADLCFILCCVPF. The Extracellular segment spans residues 82 to 99; sequence QATIYTLDGWVFGSLLCK. Cys98 and Cys175 form a disulfide bridge. The helical transmembrane segment at 100-121 threads the bilayer; the sequence is AVHFLIFLTMHASSFTLAAVSL. Residues 122–141 are Cytoplasmic-facing; that stretch reads DRYLAIRYPLHSRELRTPRN. A helical membrane pass occupies residues 142-162; it reads ALAAIGLIWGLSLLFSGPYLS. Residues 163–187 lie on the Extracellular side of the membrane; that stretch reads YYRQSQLANLTVCHPAWSAPRRRAM. Residues 188–208 form a helical membrane-spanning segment; it reads DICTFVFSYLLPVLVLGLTYA. Residues 209–237 are Cytoplasmic-facing; sequence RTLRYLWRAVDPVAAGSGARRAKRKVTRM. The chain crosses the membrane as a helical span at residues 238–258; it reads ILIVAALFCLCWMPHHALILC. Topologically, residues 259 to 260 are extracellular; sequence VW. A helical membrane pass occupies residues 261–281; that stretch reads FGQFPLTRATYALRILSHLVS. Residues 282–387 lie on the Cytoplasmic side of the membrane; sequence YANSCVNPIV…GDSILTVDVA (106 aa).

Belongs to the G-protein coupled receptor 1 family. Expressed abundantly within the central nervous system in both hypothalamus and hippocampus. In peripheral tissues, the strongest expression was observed in heart, kidney, liver, and small intestine.

It localises to the cell membrane. Receptor for the hormone galanin and GALP. Receptor for the hormone spexin-1. The activity of this receptor is mediated by G proteins that activate the phospholipase C/protein kinase C pathway (via G(q)) and that inhibit adenylyl cyclase (via G(i)). The polypeptide is Galanin receptor type 2 (GALR2) (Homo sapiens (Human)).